We begin with the raw amino-acid sequence, 357 residues long: Protein MGF 360-8L (357 aa).

Belongs to the asfivirus MGF 360 family.

Functionally, plays a role in virus cell tropism, and may be required for efficient virus replication in macrophages. The protein is Protein MGF 360-8L of African swine fever virus (isolate Tick/South Africa/Pretoriuskop Pr4/1996) (ASFV).